A 473-amino-acid chain; its full sequence is P3 protein (473 aa).

The next 9 membrane-spanning stretches (helical) occupy residues 25 to 45 (FVGM…AQVM), 221 to 241 (PMLL…FLMA), 249 to 269 (ALAL…SYLF), 277 to 297 (VTLA…FLPL), 316 to 336 (ISKI…GVVI), 356 to 376 (FILL…ILVG), 381 to 401 (IVLV…SLAI), 413 to 433 (VSIE…QLSL), and 446 to 466 (FIVA…QFIY).

The protein belongs to the bile acid:sodium symporter (BASS) (TC 2.A.28) family.

The protein resides in the membrane. Its function is as follows. The ubiquitous expression and the conservation of the sequence in distant animal species suggest that the gene codes for a protein with housekeeping functions. The protein is P3 protein (Slc10a3) of Mus musculus (Mouse).